Consider the following 138-residue polypeptide: Acidic phospholipase A2 1 (138 aa).

Residues M1 to G16 form the signal peptide. Disulfide bonds link C42/C131, C44/C60, C59/C110, C65/C138, C66/C103, C73/C97, and C91/C101. Ca(2+)-binding residues include Y43, G45, and G47. Residue H63 is part of the active site. D64 serves as a coordination point for Ca(2+). Residue D104 is part of the active site.

This sequence belongs to the phospholipase A2 family. Group II subfamily. D49 sub-subfamily. Homodimer. Ca(2+) serves as cofactor. Expressed by the venom gland.

It is found in the secreted. It catalyses the reaction a 1,2-diacyl-sn-glycero-3-phosphocholine + H2O = a 1-acyl-sn-glycero-3-phosphocholine + a fatty acid + H(+). Its function is as follows. Snake venom phospholipase A2 (PLA2) that is highly lipolytic and myolytic. PLA2 catalyzes the calcium-dependent hydrolysis of the 2-acyl groups in 3-sn-phosphoglycerides. The sequence is that of Acidic phospholipase A2 1 from Protobothrops flavoviridis (Habu).